The sequence spans 279 residues: MTGPLATGRAGTGDDVVGVEVTIDGMLVIADRLHLVDFPVTLGIRPNIPQEDLREIVWDQVARDLTAQGVLDHNGQPHPAVAAMVDTLSRADRTLEGRWWRRDVGGVMVRFVVCRKGERHVIAVRDGDMLVLQLVAPRVGLAGMVTAVLGTAEPANVEPLTGIASELGECTNAAQLTRYGLTPTTARLYTEIVTNPKSWVEIVASERHPGGTTTHTKAAAGVLDSAHGRLVSLPRQVGGELYGSFLPGTEQNLQRALDSLLELLPSGSWLDRADATARG.

It belongs to the EspG family. As to quaternary structure, interacts specifically with ESX-1-dependent PE/PPE proteins.

The protein resides in the cytoplasm. Its function is as follows. Specific chaperone for cognate PE/PPE proteins. Plays an important role in preventing aggregation of PE/PPE dimers. The protein is ESX-1 secretion-associated protein EspG1 of Mycobacterium marinum (strain ATCC BAA-535 / M).